Reading from the N-terminus, the 205-residue chain is Large ribosomal subunit protein uL3 (205 aa).

It belongs to the universal ribosomal protein uL3 family. As to quaternary structure, part of the 50S ribosomal subunit. Forms a cluster with proteins L14 and L19.

One of the primary rRNA binding proteins, it binds directly near the 3'-end of the 23S rRNA, where it nucleates assembly of the 50S subunit. This Bacteroides thetaiotaomicron (strain ATCC 29148 / DSM 2079 / JCM 5827 / CCUG 10774 / NCTC 10582 / VPI-5482 / E50) protein is Large ribosomal subunit protein uL3.